Here is a 391-residue protein sequence, read N- to C-terminus: Serine acetyltransferase 3, mitochondrial (391 aa).

Disordered regions lie at residues 40 to 82 (KHHT…HDDE) and 353 to 375 (VGNP…IPGL). Over residues 45 to 56 (SPPPSPPPPPPM) the composition is skewed to pro residues.

It belongs to the transferase hexapeptide repeat family. Homomultimer. Interacts with OASC. Component of the cysteine synthase complex (CSC) composed of two OAS-TL dimers and one SAT hexamer. Ubiquitous with higher levels in leaves and siliques. Localized in vascular tissues, particularly in phloem.

It localises to the mitochondrion. The enzyme catalyses L-serine + acetyl-CoA = O-acetyl-L-serine + CoA. It functions in the pathway amino-acid biosynthesis; L-cysteine biosynthesis; L-cysteine from L-serine: step 1/2. The chain is Serine acetyltransferase 3, mitochondrial (SAT3) from Arabidopsis thaliana (Mouse-ear cress).